Here is a 365-residue protein sequence, read N- to C-terminus: Probable dual-specificity RNA methyltransferase RlmN (365 aa).

The active-site Proton acceptor is the glutamate 108. The region spanning tyrosine 114–arginine 352 is the Radical SAM core domain. The cysteines at positions 121 and 358 are disulfide-linked. Positions 128, 132, and 135 each coordinate [4Fe-4S] cluster. S-adenosyl-L-methionine contacts are provided by residues glycine 179 to glutamate 180, serine 213, serine 236 to histidine 238, and asparagine 315. Cysteine 358 (S-methylcysteine intermediate) is an active-site residue.

This sequence belongs to the radical SAM superfamily. RlmN family. The cofactor is [4Fe-4S] cluster.

It localises to the cytoplasm. It carries out the reaction adenosine(2503) in 23S rRNA + 2 reduced [2Fe-2S]-[ferredoxin] + 2 S-adenosyl-L-methionine = 2-methyladenosine(2503) in 23S rRNA + 5'-deoxyadenosine + L-methionine + 2 oxidized [2Fe-2S]-[ferredoxin] + S-adenosyl-L-homocysteine. It catalyses the reaction adenosine(37) in tRNA + 2 reduced [2Fe-2S]-[ferredoxin] + 2 S-adenosyl-L-methionine = 2-methyladenosine(37) in tRNA + 5'-deoxyadenosine + L-methionine + 2 oxidized [2Fe-2S]-[ferredoxin] + S-adenosyl-L-homocysteine. Functionally, specifically methylates position 2 of adenine 2503 in 23S rRNA and position 2 of adenine 37 in tRNAs. The protein is Probable dual-specificity RNA methyltransferase RlmN of Mycolicibacterium vanbaalenii (strain DSM 7251 / JCM 13017 / BCRC 16820 / KCTC 9966 / NRRL B-24157 / PYR-1) (Mycobacterium vanbaalenii).